Reading from the N-terminus, the 301-residue chain is Type II restriction enzyme BslI subunit beta (301 aa).

The CHC2-type zinc finger occupies 62–82 (CPDGHTKWNQNLTKEMTCSEC).

Heterotetramer of two alpha and two beta subunits. The alpha subunit is believed to be responsible for DNA recognition, while the beta subunit is thought to mediate cleavage. Requires Zn(2+) as cofactor.

The catalysed reaction is Endonucleolytic cleavage of DNA to give specific double-stranded fragments with terminal 5'-phosphates.. Its function is as follows. A P subtype restriction enzyme that recognizes the double-stranded sequence 5'-CCN(7)GG-3' and cleaves after N-7. The chain is Type II restriction enzyme BslI subunit beta from Bacillus sp. (strain NEB-606).